Consider the following 260-residue polypeptide: MSVTVRVIPCLDVDNGRVVKGVNFEGLRDAGDPVELAKRYDALGADELTFLDVSASKDGRGTMLDVVRHTADQVFIPLTVGGGVRSEEDVDALLRAGADKVSVNSSAVARPELLRELSQRFGAQCIVLSVDARRVKDPVEADKYPSGFEVTTHGGTKSAGLDAIEWARKGEELGVGEILLNSMDGDGTKAGFDIEMLQAVRKAVSIPVIASGGAGAPDHFPPAVEAGADAVLAASIFHFGEVEIREVKQALADAGYEVRL.

Catalysis depends on residues Asp-12 and Asp-131.

It belongs to the HisA/HisF family. In terms of assembly, heterodimer of HisH and HisF.

Its subcellular location is the cytoplasm. It carries out the reaction 5-[(5-phospho-1-deoxy-D-ribulos-1-ylimino)methylamino]-1-(5-phospho-beta-D-ribosyl)imidazole-4-carboxamide + L-glutamine = D-erythro-1-(imidazol-4-yl)glycerol 3-phosphate + 5-amino-1-(5-phospho-beta-D-ribosyl)imidazole-4-carboxamide + L-glutamate + H(+). The protein operates within amino-acid biosynthesis; L-histidine biosynthesis; L-histidine from 5-phospho-alpha-D-ribose 1-diphosphate: step 5/9. Functionally, IGPS catalyzes the conversion of PRFAR and glutamine to IGP, AICAR and glutamate. The HisF subunit catalyzes the cyclization activity that produces IGP and AICAR from PRFAR using the ammonia provided by the HisH subunit. This is Imidazole glycerol phosphate synthase subunit HisF from Corynebacterium jeikeium (strain K411).